Reading from the N-terminus, the 338-residue chain is Lipoate-protein ligase A (338 aa).

One can recognise a BPL/LPL catalytic domain in the interval 29–216; that stretch reads PTTQRVLFLW…AFFDYFGEQC (188 aa). ATP is bound by residues arginine 71, 76 to 79, and lysine 134; that span reads GAVF. Lysine 134 contacts (R)-lipoate.

This sequence belongs to the LplA family. As to quaternary structure, monomer.

The protein resides in the cytoplasm. It catalyses the reaction L-lysyl-[lipoyl-carrier protein] + (R)-lipoate + ATP = N(6)-[(R)-lipoyl]-L-lysyl-[lipoyl-carrier protein] + AMP + diphosphate + H(+). It functions in the pathway protein modification; protein lipoylation via exogenous pathway; protein N(6)-(lipoyl)lysine from lipoate: step 1/2. Its pathway is protein modification; protein lipoylation via exogenous pathway; protein N(6)-(lipoyl)lysine from lipoate: step 2/2. Its function is as follows. Catalyzes both the ATP-dependent activation of exogenously supplied lipoate to lipoyl-AMP and the transfer of the activated lipoyl onto the lipoyl domains of lipoate-dependent enzymes. The protein is Lipoate-protein ligase A of Pectobacterium carotovorum subsp. carotovorum (strain PC1).